The chain runs to 70 residues: Melittin (70 aa).

Residues 1–21 form the signal peptide; the sequence is MKFLVNVALVFMVVYISYIYA. The propeptide at 22 to 43 is removed by a dipeptidylpeptidase; sequence APEPEPAPEPEAEADAEADPEA. Gly-44 carries the N-formylglycine; partial modification. Gln-69 carries the glutamine amide modification.

The protein belongs to the melittin family. Monomer (in solution and for integration into membranes), homotetramer (in solution and potentially as a toroidal pore in membranes), and potenially homomultimer (as a toroidal pore in membranes). Expressed by the venom gland.

The protein resides in the secreted. It localises to the target cell membrane. Melittin: Main toxin of bee venom with strong antimicrobial activity and hemolytic activity. It has enhancing effects on bee venom phospholipase A2 activity. This amphipathic toxin binds to negatively charged membrane surface and forms pore by inserting into lipid bilayers inducing the leakage of ions and molecules and the enhancement of permeability that ultimately leads to cell lysis. It acts as a voltage-gated pore with higher selectivity for anions over cations. The ion conductance has been shown to be voltage-dependent. Self-association of melittin in membranes is promoted by high ionic strength, but not by the presence of negatively charged lipids. In vivo, intradermal injection into healthy human volunteers produce sharp pain sensation and an inflammatory response. It produces pain by activating primary nociceptor cells directly and indirectly due to its ability to activate plasma membrane phospholipase A2 and its pore-forming activity. In the context of inflammation and cancer tests, is highly cytotoxic to normal cells, highly induces calcium signaling and almost completely prevents cAMP production. In addition, prevents LPS-induced nitric oxid (NO) synthesis but does not affect the IP3 signaling and pro-inflammatory activation of endothelial cells. Also shows significant antiproliferative activity on the breast cancer cell line MDA-MB-231. Its function is as follows. Melittin-S: 1.4-fold less hemolytic and adopts a less organized secondary structure than melittin. In terms of biological role, melittin-2: Has strong hemolytic activity. The protein is Melittin (MELT) of Apis mellifera (Honeybee).